The chain runs to 1021 residues: Nonribosomal peptide synthetase asaC (1021 aa).

The tract at residues 17–418 is adenylation (A) domain; sequence RHHVRTSPNA…ARADNMVKIR (402 aa). The Carrier domain occupies 528-603; that stretch reads KDAGDSVTWL…GLASVIDAGH (76 aa). Ser-563 is subject to O-(pantetheine 4'-phosphoryl)serine. Residues 646 to 888 form a short-chain dehydrogenase/reductase (R) domain region; that stretch reads LTGATGFLGT…MIPVDFITTA (243 aa).

The protein belongs to the NRP synthetase family.

It participates in secondary metabolite biosynthesis. In terms of biological role, nonribosomal peptide synthetase; part of the gene cluster that mediates the biosynthesis of aspergillic acid, a hydroxamic acid-containing pyrazinone with aliphatic side chains that originates from leucine (Leu) and isoleucine (Ile). Aspergillic acid has antibiotic properties and was shown to be lethal to mice. The first step in the pathway is the production of deoxyaspergillic acid via a condensation between the Ile amine and the Leu carboxylic acid, followed by a reductive release from the protein forming the dipeptide aldehyde NH(2)-Leu-Ile-CHO, which could undergo an intermolecular cyclization resulting in a dihydropyrazinone. As the NRPS asaC lacks a condensation domain, it is improbable that it is responsible for condensation of Leu and Ile. One possibility is that asaC acts on a previously condensed dipeptide and functions as a Leu-Ile reductase to yield deoxyaspergillic acid. After asaC forms deoxyaspergillic acid, the cytochrome P450 asaD oxidizes the pyrazinone to the hydroxamic acid-containing bioactive metabolite aspergillic acid. The hydroxylase/desaturase asaB can then convert aspergillic acid to hydroxyaspergillic acid. Both aspergillic acid and hydroxyaspergillic acid can form complexes with iron producing ferriaspergillin analogs. The polypeptide is Nonribosomal peptide synthetase asaC (Aspergillus flavus (strain ATCC 200026 / FGSC A1120 / IAM 13836 / NRRL 3357 / JCM 12722 / SRRC 167)).